The primary structure comprises 858 residues: Transcription factor pytR (858 aa).

The interval methionine 1–leucine 35 is disordered. The segment at residues cysteine 39 to cysteine 65 is a DNA-binding region (zn(2)-C6 fungal-type). The interval arginine 72–glycine 99 is disordered.

The protein localises to the nucleus. Transcription factor that regulates the expression of the gene cluster that mediates the biosynthesis of Pyranterreones, a family of antioxidative compounds. The polypeptide is Transcription factor pytR (Aspergillus terreus (strain NIH 2624 / FGSC A1156)).